The chain runs to 49 residues: Small, acid-soluble spore protein O (49 aa).

Residues 1–49 (MGKRKANHTISGMNAASAQGQGAGYNEEFANENLTPAERQNNKKRKKNQ) form a disordered region. Residues 8-20 (HTISGMNAASAQG) show a composition bias toward polar residues.

This sequence belongs to the SspO family.

The protein localises to the spore core. This chain is Small, acid-soluble spore protein O, found in Bacillus anthracis (strain A0248).